Reading from the N-terminus, the 318-residue chain is Glutathione synthetase (318 aa).

In terms of domain architecture, ATP-grasp spans 133-317; sequence KMYALQFTSV…LGQQVMAWLF (185 aa). ATP is bound at residue 159–215; the sequence is VQQQGMAVLKPLGGKGGEGILFLQAGDRNLNSMIEISTQRGQLPVMLQEYLPAAKEG. 2 residues coordinate Mg(2+): E288 and N290.

The protein belongs to the prokaryotic GSH synthase family. The cofactor is Mg(2+). Requires Mn(2+) as cofactor.

The enzyme catalyses gamma-L-glutamyl-L-cysteine + glycine + ATP = glutathione + ADP + phosphate + H(+). The protein operates within sulfur metabolism; glutathione biosynthesis; glutathione from L-cysteine and L-glutamate: step 2/2. This Thermosynechococcus vestitus (strain NIES-2133 / IAM M-273 / BP-1) protein is Glutathione synthetase.